A 1065-amino-acid chain; its full sequence is Isoleucine--tRNA ligase (1065 aa).

The 'HIGH' region motif lies at proline 49 to threonine 59. Positions lysine 625 to serine 629 match the 'KMSKS' region motif. An ATP-binding site is contributed by lysine 628.

Belongs to the class-I aminoacyl-tRNA synthetase family. IleS type 2 subfamily. Monomer. Requires Zn(2+) as cofactor.

It localises to the cytoplasm. The enzyme catalyses tRNA(Ile) + L-isoleucine + ATP = L-isoleucyl-tRNA(Ile) + AMP + diphosphate. Catalyzes the attachment of isoleucine to tRNA(Ile). As IleRS can inadvertently accommodate and process structurally similar amino acids such as valine, to avoid such errors it has two additional distinct tRNA(Ile)-dependent editing activities. One activity is designated as 'pretransfer' editing and involves the hydrolysis of activated Val-AMP. The other activity is designated 'posttransfer' editing and involves deacylation of mischarged Val-tRNA(Ile). This chain is Isoleucine--tRNA ligase, found in Thermococcus kodakarensis (strain ATCC BAA-918 / JCM 12380 / KOD1) (Pyrococcus kodakaraensis (strain KOD1)).